We begin with the raw amino-acid sequence, 558 residues long: uncharacterized protein (558 aa).

The next 5 membrane-spanning stretches (helical) occupy residues 15–32, 39–61, 76–95, 104–126, and 166–188; these read PSVT…ALGL, IGTI…HFGV, LVIF…FPSL, LISL…ILGI, and MALA…LALL. RCK C-terminal domains follow at residues 196 to 278 and 286 to 370; these read EERD…LFGK and RPDI…ILGD. The next 5 helical transmembrane spans lie at 383–405, 409–426, 446–468, 473–495, and 533–555; these read LFGG…GVSM, LGLA…GAFG, FGII…DTII, LLWV…WASI, and VVYA…IMIL.

The protein belongs to the AAE transporter (TC 2.A.81) family.

Its subcellular location is the cell membrane. This is an uncharacterized protein from Porphyromonas gingivalis (strain ATCC BAA-308 / W83).